The sequence spans 298 residues: Tyrosine recombinase XerD (298 aa).

A Core-binding (CB) domain is found at 3–88 (SSHNNLLQNF…AIRQFYKFLK (86 aa)). A Tyr recombinase domain is found at 109 to 292 (SIPDYLTQDE…ANKTLREVHK (184 aa)). Active-site residues include Arg149, Lys173, His244, Arg247, and His270. Catalysis depends on Tyr279, which acts as the O-(3'-phospho-DNA)-tyrosine intermediate.

This sequence belongs to the 'phage' integrase family. XerD subfamily. As to quaternary structure, forms a cyclic heterotetrameric complex composed of two molecules of XerC and two molecules of XerD.

The protein localises to the cytoplasm. Its function is as follows. Site-specific tyrosine recombinase, which acts by catalyzing the cutting and rejoining of the recombining DNA molecules. The XerC-XerD complex is essential to convert dimers of the bacterial chromosome into monomers to permit their segregation at cell division. It also contributes to the segregational stability of plasmids. The protein is Tyrosine recombinase XerD of Leptospira interrogans serogroup Icterohaemorrhagiae serovar copenhageni (strain Fiocruz L1-130).